Consider the following 376-residue polypeptide: Erythronate-4-phosphate dehydrogenase (376 aa).

Substrate contacts are provided by Ser-45 and Thr-66. NAD(+) is bound by residues 126-127 (QV), Asp-146, Thr-174, 201-203 (ASR), and Asp-227. Arg-203 is a catalytic residue. Glu-232 is an active-site residue. His-249 functions as the Proton donor in the catalytic mechanism. Gly-252 serves as a coordination point for NAD(+). Tyr-253 contacts substrate.

Belongs to the D-isomer specific 2-hydroxyacid dehydrogenase family. PdxB subfamily. As to quaternary structure, homodimer.

The protein localises to the cytoplasm. It carries out the reaction 4-phospho-D-erythronate + NAD(+) = (R)-3-hydroxy-2-oxo-4-phosphooxybutanoate + NADH + H(+). It functions in the pathway cofactor biosynthesis; pyridoxine 5'-phosphate biosynthesis; pyridoxine 5'-phosphate from D-erythrose 4-phosphate: step 2/5. Functionally, catalyzes the oxidation of erythronate-4-phosphate to 3-hydroxy-2-oxo-4-phosphonooxybutanoate. This is Erythronate-4-phosphate dehydrogenase from Ectopseudomonas mendocina (strain ymp) (Pseudomonas mendocina).